The primary structure comprises 314 residues: 4-hydroxy-3-methylbut-2-enyl diphosphate reductase (314 aa).

C18 is a binding site for [4Fe-4S] cluster. The (2E)-4-hydroxy-3-methylbut-2-enyl diphosphate site is built by H47 and H80. Residues H47 and H80 each contribute to the dimethylallyl diphosphate site. Residues H47 and H80 each coordinate isopentenyl diphosphate. Position 102 (C102) interacts with [4Fe-4S] cluster. H130 lines the (2E)-4-hydroxy-3-methylbut-2-enyl diphosphate pocket. H130 serves as a coordination point for dimethylallyl diphosphate. Residue H130 participates in isopentenyl diphosphate binding. Residue E132 is the Proton donor of the active site. Position 171 (T171) interacts with (2E)-4-hydroxy-3-methylbut-2-enyl diphosphate. [4Fe-4S] cluster is bound at residue C201. (2E)-4-hydroxy-3-methylbut-2-enyl diphosphate-binding residues include S229, S230, N231, and S273. Dimethylallyl diphosphate contacts are provided by S229, S230, N231, and S273. S229, S230, N231, and S273 together coordinate isopentenyl diphosphate.

Belongs to the IspH family. Requires [4Fe-4S] cluster as cofactor.

The enzyme catalyses isopentenyl diphosphate + 2 oxidized [2Fe-2S]-[ferredoxin] + H2O = (2E)-4-hydroxy-3-methylbut-2-enyl diphosphate + 2 reduced [2Fe-2S]-[ferredoxin] + 2 H(+). The catalysed reaction is dimethylallyl diphosphate + 2 oxidized [2Fe-2S]-[ferredoxin] + H2O = (2E)-4-hydroxy-3-methylbut-2-enyl diphosphate + 2 reduced [2Fe-2S]-[ferredoxin] + 2 H(+). Its pathway is isoprenoid biosynthesis; dimethylallyl diphosphate biosynthesis; dimethylallyl diphosphate from (2E)-4-hydroxy-3-methylbutenyl diphosphate: step 1/1. It functions in the pathway isoprenoid biosynthesis; isopentenyl diphosphate biosynthesis via DXP pathway; isopentenyl diphosphate from 1-deoxy-D-xylulose 5-phosphate: step 6/6. In terms of biological role, catalyzes the conversion of 1-hydroxy-2-methyl-2-(E)-butenyl 4-diphosphate (HMBPP) into a mixture of isopentenyl diphosphate (IPP) and dimethylallyl diphosphate (DMAPP). Acts in the terminal step of the DOXP/MEP pathway for isoprenoid precursor biosynthesis. This chain is 4-hydroxy-3-methylbut-2-enyl diphosphate reductase, found in Phenylobacterium zucineum (strain HLK1).